The primary structure comprises 232 residues: Phosphatidylserine decarboxylase proenzyme (232 aa).

Catalysis depends on serine 190, which acts as the Schiff-base intermediate with substrate; via pyruvic acid. The residue at position 190 (serine 190) is a Pyruvic acid (Ser); by autocatalysis.

This sequence belongs to the phosphatidylserine decarboxylase family. PSD-A subfamily. Heterodimer of a large membrane-associated beta subunit and a small pyruvoyl-containing alpha subunit. Pyruvate is required as a cofactor. Post-translationally, is synthesized initially as an inactive proenzyme. Formation of the active enzyme involves a self-maturation process in which the active site pyruvoyl group is generated from an internal serine residue via an autocatalytic post-translational modification. Two non-identical subunits are generated from the proenzyme in this reaction, and the pyruvate is formed at the N-terminus of the alpha chain, which is derived from the carboxyl end of the proenzyme. The post-translation cleavage follows an unusual pathway, termed non-hydrolytic serinolysis, in which the side chain hydroxyl group of the serine supplies its oxygen atom to form the C-terminus of the beta chain, while the remainder of the serine residue undergoes an oxidative deamination to produce ammonia and the pyruvoyl prosthetic group on the alpha chain.

Its subcellular location is the cell membrane. The catalysed reaction is a 1,2-diacyl-sn-glycero-3-phospho-L-serine + H(+) = a 1,2-diacyl-sn-glycero-3-phosphoethanolamine + CO2. Its pathway is phospholipid metabolism; phosphatidylethanolamine biosynthesis; phosphatidylethanolamine from CDP-diacylglycerol: step 2/2. In terms of biological role, catalyzes the formation of phosphatidylethanolamine (PtdEtn) from phosphatidylserine (PtdSer). The polypeptide is Phosphatidylserine decarboxylase proenzyme (Rhodopseudomonas palustris (strain BisA53)).